We begin with the raw amino-acid sequence, 358 residues long: Peptide chain release factor 1 (358 aa).

Gln233 bears the N5-methylglutamine mark.

Belongs to the prokaryotic/mitochondrial release factor family. Methylated by PrmC. Methylation increases the termination efficiency of RF1.

The protein resides in the cytoplasm. Functionally, peptide chain release factor 1 directs the termination of translation in response to the peptide chain termination codons UAG and UAA. The polypeptide is Peptide chain release factor 1 (Listeria innocua serovar 6a (strain ATCC BAA-680 / CLIP 11262)).